Reading from the N-terminus, the 460-residue chain is Probable glucan endo-1,3-beta-glucosidase eglC (460 aa).

An N-terminal signal peptide occupies residues 1–18; that stretch reads MQLAQLAAFAMTLATSEA. Glu128 acts as the Proton donor in catalysis. Residue Asn183 is glycosylated (N-linked (GlcNAc...) asparagine). Glu239 acts as the Nucleophile in catalysis. 3 N-linked (GlcNAc...) asparagine glycosylation sites follow: Asn312, Asn367, and Asn373. The disordered stretch occupies residues 379–437; the sequence is RPSGSASARPSAGAISSGSGSSSSGSGSSGSTGTSATSGQSSSSGSSAAAGSSSPAAFS. The span at 380–437 shows a compositional bias: low complexity; the sequence is PSGSASARPSAGAISSGSGSSSSGSGSSGSTGTSATSGQSSSSGSSAAAGSSSPAAFS. A lipid anchor (GPI-anchor amidated serine) is attached at Ser430. Residues 431–460 constitute a propeptide, removed in mature form; sequence SSPAAFSGASTLSGSLFGAVVAVFMTLAAL.

The protein belongs to the glycosyl hydrolase 17 family. Post-translationally, the GPI-anchor is attached to the protein in the endoplasmic reticulum and serves to target the protein to the cell surface. There, the glucosamine-inositol phospholipid moiety is cleaved off and the GPI-modified mannoprotein is covalently attached via its lipidless GPI glycan remnant to the 1,6-beta-glucan of the outer cell wall layer.

The protein localises to the cell membrane. The protein resides in the secreted. It localises to the cell wall. The enzyme catalyses Hydrolysis of (1-&gt;3)-beta-D-glucosidic linkages in (1-&gt;3)-beta-D-glucans.. Glucanases play a role in cell expansion during growth, in cell-cell fusion during mating, and in spore release during sporulation. This enzyme may be involved in beta-glucan degradation and also function biosynthetically as a transglycosylase. The chain is Probable glucan endo-1,3-beta-glucosidase eglC (eglC) from Aspergillus niger (strain ATCC MYA-4892 / CBS 513.88 / FGSC A1513).